The sequence spans 885 residues: Alanine--tRNA ligase (885 aa).

Zn(2+) contacts are provided by His-572, His-576, Cys-675, and His-679.

Belongs to the class-II aminoacyl-tRNA synthetase family. The cofactor is Zn(2+).

It is found in the cytoplasm. It catalyses the reaction tRNA(Ala) + L-alanine + ATP = L-alanyl-tRNA(Ala) + AMP + diphosphate. Its function is as follows. Catalyzes the attachment of alanine to tRNA(Ala) in a two-step reaction: alanine is first activated by ATP to form Ala-AMP and then transferred to the acceptor end of tRNA(Ala). Also edits incorrectly charged Ser-tRNA(Ala) and Gly-tRNA(Ala) via its editing domain. The polypeptide is Alanine--tRNA ligase (Leifsonia xyli subsp. xyli (strain CTCB07)).